The chain runs to 63 residues: Large ribosomal subunit protein uL29 (63 aa).

It belongs to the universal ribosomal protein uL29 family.

This is Large ribosomal subunit protein uL29 from Idiomarina loihiensis (strain ATCC BAA-735 / DSM 15497 / L2-TR).